The following is a 186-amino-acid chain: Thymidine kinase (186 aa).

G8–T15 is an ATP binding site. E86 (proton acceptor) is an active-site residue. F118 serves as a coordination point for substrate. 2 residues coordinate Zn(2+): C143 and C146. Position 162–166 (I162–G166) interacts with substrate. C175 and C178 together coordinate Zn(2+).

Belongs to the thymidine kinase family.

The catalysed reaction is thymidine + ATP = dTMP + ADP + H(+). The polypeptide is Thymidine kinase (TK) (Choristoneura fumiferana (Spruce budworm moth)).